Here is a 469-residue protein sequence, read N- to C-terminus: 3-isopropylmalate dehydratase large subunit (469 aa).

[4Fe-4S] cluster contacts are provided by Cys349, Cys410, and Cys413.

Belongs to the aconitase/IPM isomerase family. LeuC type 1 subfamily. In terms of assembly, heterodimer of LeuC and LeuD. The cofactor is [4Fe-4S] cluster.

The enzyme catalyses (2R,3S)-3-isopropylmalate = (2S)-2-isopropylmalate. It participates in amino-acid biosynthesis; L-leucine biosynthesis; L-leucine from 3-methyl-2-oxobutanoate: step 2/4. Its function is as follows. Catalyzes the isomerization between 2-isopropylmalate and 3-isopropylmalate, via the formation of 2-isopropylmaleate. In Neisseria meningitidis serogroup C (strain 053442), this protein is 3-isopropylmalate dehydratase large subunit.